The following is a 256-amino-acid chain: MRHPVVMGNWKLNGSKEMVVELLNGLNAELEGVTGVDVAVAPPALFVDLAERTLTEAGSAIILGAQNTDLNNSGAFTGDMSPAMLKEFGATHIIIGHSERREYHNESDEFVAKKFAFLKENGLTPVLCIGESEAQNEAGETVAVCARQIDAVINTQGVDALNGAIIAYEPIWAIGTGKAATAEDAQRIHAQIRAHIAEKSEEVAKNVVIQYGGSVKPENAAAYFAQPDIDGALVGGAALDAKSFAAIAKAAAEAKA.

9-11 (NWK) contacts substrate. Histidine 97 acts as the Electrophile in catalysis. Catalysis depends on glutamate 169, which acts as the Proton acceptor. Residues glycine 175, serine 214, and 235-236 (GG) each bind substrate.

Belongs to the triosephosphate isomerase family. Homodimer.

It is found in the cytoplasm. The catalysed reaction is D-glyceraldehyde 3-phosphate = dihydroxyacetone phosphate. Its pathway is carbohydrate biosynthesis; gluconeogenesis. It functions in the pathway carbohydrate degradation; glycolysis; D-glyceraldehyde 3-phosphate from glycerone phosphate: step 1/1. Functionally, involved in the gluconeogenesis. Catalyzes stereospecifically the conversion of dihydroxyacetone phosphate (DHAP) to D-glyceraldehyde-3-phosphate (G3P). The polypeptide is Triosephosphate isomerase (Aliivibrio fischeri (strain ATCC 700601 / ES114) (Vibrio fischeri)).